Reading from the N-terminus, the 176-residue chain is Translation initiation factor IF-3 (176 aa).

The protein belongs to the IF-3 family. In terms of assembly, monomer.

The protein localises to the cytoplasm. Its function is as follows. IF-3 binds to the 30S ribosomal subunit and shifts the equilibrium between 70S ribosomes and their 50S and 30S subunits in favor of the free subunits, thus enhancing the availability of 30S subunits on which protein synthesis initiation begins. In Microcystis aeruginosa (strain NIES-843 / IAM M-2473), this protein is Translation initiation factor IF-3.